Reading from the N-terminus, the 371-residue chain is Outer membrane protein P2 (371 aa).

Positions 1-20 are cleaved as a signal peptide; the sequence is MKKTLAALIVGAFAASAANA.

It belongs to the Gram-negative porin family. As to quaternary structure, homotrimer.

It localises to the cell outer membrane. Forms pores that allow passive diffusion of small molecules across the outer membrane. The polypeptide is Outer membrane protein P2 (ompP2) (Haemophilus influenzae).